Reading from the N-terminus, the 875-residue chain is MGDSDDEYDRRRRDKFRRERSDYDRSRERDERRRGDDWNDREWDRGRERRSRGEYRDYDRNRRERFSPPRHELSPPQKRMRRDWDEHSSDPYHSGYDMPYAGGGGGPTYGPPQPWGHPDVHIMQHHVLPIQARLGSIAEIDLGVPPPIMKSFKEFLLSLDDSVDETEAVKRYNDYKLDFRRQQMQDFFLAHKDEEWFRSKYHPDEVGKRRQEARGALQNRLKVFLSLMESGWFDNLLLDIDKADAIVKMLDAAVIKMEGGTENDLRILEQEEEEEQAGKTGEASKKEEARAGPALGEGERKANDKDEKKEDGKQAENDSSNDDKTKKSEGDGDKEEKKEEAEKEAKKSKKRNRKQSGDDSFDEGSVSESESESEGGQAEEEKEEAEEALKEKEKPKEEEKEKPKDAAGLECKPRPLHKTCSLFMRNIAPNISRAEIISLCKRYPGFMRVALSEPQPERRFFRRGWVTFDRSVNIKEICWNLQNIRLRECELSPGVNRDLTRRVRNINGITQHKQIVRNDIKLAAKLIHTLDDRTQLWASEPGTPPVPTSLPSQNPILKNITDYLIEEVSAEEEELLGSSGGPPPEEPPKEGNPAEINVERDEKLIKVLDKLLLYLRIVHSLDYYNTCEYPNEDEMPNRCGIIHVRGPMPPNRISHGEVLEWQKTFEEKLTPLLSVRESLSEEEAQKMGRKDPEQEVEKFVTSNTQELGKDKWLCPLSGKKFKGPEFVRKHIFNKHAEKIEEVKKEVAFFNNFLTDAKRPALPEIKPAQPPGPAQILPPGLTPGLPYPHQTPQGLMPYGQPRPPILGYGAGAVRPAVPTGGPPYPHAPYGAGRGNYDAFRGQGGYPGKPRNRMVRGDPRAIVEYRDLDAPDDVDFF.

Positions 1–90 (MGDSDDEYDR…RRDWDEHSSD (90 aa)) are disordered. Gly2 bears the N-acetylglycine mark. The residue at position 4 (Ser4) is a Phosphoserine. Tyr8 is subject to Phosphotyrosine. Over residues 8–73 (YDRRRRDKFR…ERFSPPRHEL (66 aa)) the composition is skewed to basic and acidic residues. A phosphoserine mark is found at Ser67, Ser74, and Ser136. Lys150 participates in a covalent cross-link: Glycyl lysine isopeptide (Lys-Gly) (interchain with G-Cter in SUMO2). The disordered stretch occupies residues 272–411 (EEEEQAGKTG…KPKDAAGLEC (140 aa)). Over residues 297 to 345 (EGERKANDKDEKKEDGKQAENDSSNDDKTKKSEGDGDKEEKKEEAEKEA) the composition is skewed to basic and acidic residues. Residues 369-386 (SESESEGGQAEEEKEEAE) show a composition bias toward acidic residues. Residues 387–411 (EALKEKEKPKEEEKEKPKDAAGLEC) show a composition bias toward basic and acidic residues. 2 positions are modified to phosphoserine: Ser492 and Ser539. A Phosphothreonine modification is found at Thr543. Ser569 carries the phosphoserine modification. The interval 571-597 (EEEELLGSSGGPPPEEPPKEGNPAEIN) is disordered. A Phosphothreonine modification is found at Thr670. Ser678 is modified (phosphoserine). An omega-N-methylarginine mark is found at Arg832, Arg839, and Arg849. A disordered region spans residues 834–853 (NYDAFRGQGGYPGKPRNRMV).

Belongs to the ARS2 family. As to quaternary structure, interacts with CASP8AP2 and ERBB4. Interacts with NCBP1/CBP80 and DROSHA. Interacts with LUZP4. Interacts with NCBP2/CBP20 and NCBP3. Interacts with MTREX. As to expression, widely expressed, with a preference for proliferating cells. Highly expressed in hematopoietic tissues and reduced or absent expression in parenchymal organs like liver and kidney. In the brain, expressed in the subventricular zone by niche astrocytes, ependymal cells and neural stem cells. In this cerebral context, expressed in slowly dividing cells.

It localises to the nucleus. The protein resides in the nucleoplasm. It is found in the cytoplasm. Acts as a mediator between the cap-binding complex (CBC) and the primary microRNAs (miRNAs) processing machinery during cell proliferation. Contributes to the stability and delivery of capped primary miRNA transcripts to the primary miRNA processing complex containing DGCR8 and DROSHA, thereby playing a role in RNA-mediated gene silencing (RNAi) by miRNAs. Binds capped RNAs (m7GpppG-capped RNA); however interaction is probably mediated via its interaction with NCBP1/CBP80 component of the CBC complex. Involved in cell cycle progression at S phase. Does not directly confer arsenite resistance but rather modulates arsenic sensitivity. Independently of its activity on miRNAs, necessary and sufficient to promote neural stem cell self-renewal. Does so by directly binding SOX2 promoter and positively regulating its transcription. The chain is Serrate RNA effector molecule homolog (Srrt) from Mus musculus (Mouse).